Consider the following 353-residue polypeptide: Guanine nucleotide-binding protein G(q) subunit alpha (353 aa).

Residues Cys-3 and Cys-4 are each lipidated (S-palmitoyl cysteine). Residues 32-353 (RELKLLLLGT…QLNLKEYNLV (322 aa)) enclose the G-alpha domain. The segment at 35 to 48 (KLLLLGTGESGKST) is G1 motif. Residues 40-47 (GTGESGKS), 174-180 (LRVRVPT), 199-203 (DVGGQ), 268-271 (NKKD), and Ala-325 each bind GTP. Mg(2+) is bound by residues Ser-47 and Thr-180. The segment at 172–180 (DILRVRVPT) is G2 motif. The interval 195-204 (FRMVDVGGQR) is G3 motif. The segment at 264–271 (ILFLNKKD) is G4 motif. The G5 motif stretch occupies residues 323 to 328 (TCATDT).

The protein belongs to the G-alpha family. G(q) subfamily. G proteins are composed of 3 units; alpha, beta and gamma. The alpha chain contains the guanine nucleotide binding site.

In terms of biological role, guanine nucleotide-binding proteins (G proteins) are involved as modulators or transducers in various transmembrane signaling systems. This is Guanine nucleotide-binding protein G(q) subunit alpha from Lymnaea stagnalis (Great pond snail).